The following is a 376-amino-acid chain: MASILALDGLYAEVPKFLPEALREGCAGKKPLSFYIQQILNLMGCDGDEYHVLFTSSSEEANTHMITAAVRRHLLRTRQRPHVIIGAAEPPSVTECVKALAREKRCVYTIIPLKNFEIDPVAVYDAIQSNTCLACISGTNAVVKTFNKLQDISNVLRGIPLHSEVSDLVYQGCIQQNPPADSFSLNSLYGFLGVGVLGMKKKVMQDLGPLIFGGGLRGGSPNIPGIHAMYRTLIQQRPSIKKINTIHKLFIKTLKKHQHVYLPGLSIEDVPSNGMPVEVPKGLPGYILFSVGHSAEELQKKIFTKFNVKVGRIVNLQEMLFRIKIPQKYWETLLFIQLRDVLTKEDIKRVMVVLMYLDTITPRGSLPPPSHSSSFS.

Residues 58-59 (SE) and 184-186 (SLN) contribute to the pyridoxal 5'-phosphate site.

Belongs to the class-V pyridoxal-phosphate-dependent aminotransferase family. NifS/IscS subfamily. Requires pyridoxal 5'-phosphate as cofactor.

It localises to the virion. This chain is NifS-like protein, found in African swine fever virus (isolate Tick/Malawi/Lil 20-1/1983) (ASFV).